We begin with the raw amino-acid sequence, 530 residues long: Glucocorticoid modulatory element-binding protein 2 (530 aa).

Residues 81–163 (EEGENLEAEI…RKIMDSGELD (83 aa)) enclose the SAND domain. Zn(2+) is bound at residue Cys-110. DNA contacts are provided by Lys-136, Lys-140, Lys-143, and Arg-154. Lys-155 is covalently cross-linked (Glycyl lysine isopeptide (Lys-Gly) (interchain with G-Cter in SUMO1); alternate). A Glycyl lysine isopeptide (Lys-Gly) (interchain with G-Cter in SUMO2); alternate cross-link involves residue Lys-155. The Zn(2+) site is built by His-167, Cys-171, and Cys-175. A coiled-coil region spans residues 304-348 (QMDRSREQYARDLAALEQQCDEHRRRAKELKHKSQHLSNVLMTLT). Phosphoserine is present on Ser-373.

Homodimer, and heterodimer of GMEB1 and GMEB2. GMEB1 and GMEB2 form the parvovirus initiator complex (PIF). Interacts with the glucocorticoid receptor (NR3C1). May interact with CREB-binding protein (CBP). Expressed in peripheral blood lymphocytes and fetal liver. Expressed preferentially in reproductive and/or developmentally important cells, such as testis, placenta, bone marrow and fetal tissues.

Its subcellular location is the nucleus. It is found in the cytoplasm. Functionally, trans-acting factor that binds to glucocorticoid modulatory elements (GME) present in the TAT (tyrosine aminotransferase) promoter and increases sensitivity to low concentrations of glucocorticoids. Also binds to the transferrin receptor promoter. Essential auxiliary factor for the replication of parvoviruses. The chain is Glucocorticoid modulatory element-binding protein 2 (GMEB2) from Homo sapiens (Human).